We begin with the raw amino-acid sequence, 146 residues long: Hemoglobin subunit beta (146 aa).

N-acetylvaline is present on Val-1. In terms of domain architecture, Globin spans 2–146 (HLTGEEKSAV…VANALAHKYH (145 aa)). Thr-12 carries the phosphothreonine modification. Ser-44 carries the phosphoserine modification. Lys-59 carries the N6-acetyllysine modification. His-63 is a heme b binding site. The residue at position 82 (Lys-82) is an N6-acetyllysine. Residue His-92 participates in heme b binding. Cys-93 is modified (S-nitrosocysteine). Lys-144 is subject to N6-acetyllysine.

This sequence belongs to the globin family. In terms of assembly, heterotetramer of two alpha chains and two beta chains. In terms of tissue distribution, red blood cells.

Its function is as follows. Involved in oxygen transport from the lung to the various peripheral tissues. The sequence is that of Hemoglobin subunit beta (HBB) from Mico argentatus (Silvery marmoset).